The chain runs to 506 residues: Cytochrome P450 6a2 (506 aa).

Cys451 is a binding site for heme.

This sequence belongs to the cytochrome P450 family. The cofactor is heme.

The protein localises to the endoplasmic reticulum membrane. The protein resides in the microsome membrane. Functionally, is involved in the breakdown of synthetic insecticides and may be involved in the metabolism of insect hormones. The polypeptide is Cytochrome P450 6a2 (Cyp6a2) (Drosophila melanogaster (Fruit fly)).